Reading from the N-terminus, the 114-residue chain is Iron-sulfur cluster insertion protein ErpA (114 aa).

The iron-sulfur cluster site is built by Cys42, Cys106, and Cys108.

The protein belongs to the HesB/IscA family. Homodimer. It depends on iron-sulfur cluster as a cofactor.

Functionally, required for insertion of 4Fe-4S clusters for at least IspG. The chain is Iron-sulfur cluster insertion protein ErpA from Haemophilus ducreyi (strain 35000HP / ATCC 700724).